A 177-amino-acid polypeptide reads, in one-letter code: Disulfide bond formation protein B (177 aa).

Over 1-14 (MLIFFKNLSMKRST) the chain is Cytoplasmic. Residues 15–31 (WILLFISALVLESTALY) traverse the membrane as a helical segment. Over 32–49 (FQHGMGLNPCVMCIYERV) the chain is Periplasmic. Cysteine 41 and cysteine 44 are oxidised to a cystine. The chain crosses the membrane as a helical span at residues 50–65 (AILGILFSGLIGCIAP). At 66-72 (KWLVLRI) the chain is on the cytoplasmic side. Residues 73-90 (LALLIGLGSAVKGLLLAI) form a helical membrane-spanning segment. Over 91-145 (KHLDYQINVYPWNQCAMVPDFPQTLPLDKWFPNIFMPSGSCSDITWSFLGFSMVQ) the chain is Periplasmic. A disulfide bridge connects residues cysteine 105 and cysteine 131. The helical transmembrane segment at 146 to 164 (WIIVIFACYFLFFIILSIS) threads the bilayer. The Cytoplasmic portion of the chain corresponds to 165-177 (QFKKVRKNRMLFR).

Belongs to the DsbB family.

The protein localises to the cell inner membrane. Functionally, required for disulfide bond formation in some periplasmic proteins. Acts by oxidizing the DsbA protein. This is Disulfide bond formation protein B from Histophilus somni (strain 129Pt) (Haemophilus somnus).